The following is a 552-amino-acid chain: Putative transport protein HSM_0534 (552 aa).

The next 5 helical transmembrane spans lie at 4–24, 28–48, 67–87, 95–115, and 157–177; these read IAIT…IGHW, GVGL…HFMN, LILF…ASLL, GLAT…YKVV, and MAYA…MWLI. RCK C-terminal domains are found at residues 190 to 275 and 277 to 360; these read KQFQ…VIGE and IDMP…IIGN. 6 helical membrane-spanning segments follow: residues 370 to 390, 402 to 424, 438 to 458, 463 to 483, 495 to 515, and 529 to 549; these read MLPV…PFYI, AGGP…LYWF, IVLF…DTLV, LEWM…TGII, LCGL…ANAI, and VYPL…ILLW.

This sequence belongs to the AAE transporter (TC 2.A.81) family. YidE subfamily.

Its subcellular location is the cell membrane. The chain is Putative transport protein HSM_0534 from Histophilus somni (strain 2336) (Haemophilus somnus).